The primary structure comprises 76 residues: cAMP-dependent protein kinase inhibitor alpha (76 aa).

T2 carries the N-acetylthreonine modification. Positions 49 to 76 (KTEGEEDAQRNSTEQSGEAQGEAAKSES) are disordered.

This sequence belongs to the PKI family.

Functionally, extremely potent competitive inhibitor of cAMP-dependent protein kinase activity, this protein interacts with the catalytic subunit of the enzyme after the cAMP-induced dissociation of its regulatory chains. The polypeptide is cAMP-dependent protein kinase inhibitor alpha (PKIA) (Bos taurus (Bovine)).